Consider the following 200-residue polypeptide: Peptidyl-tRNA hydrolase (200 aa).

Residue Tyr14 coordinates tRNA. Residue His19 is the Proton acceptor of the active site. Residues Phe64, Asn66, and Asn112 each coordinate tRNA.

It belongs to the PTH family. In terms of assembly, monomer.

It is found in the cytoplasm. The enzyme catalyses an N-acyl-L-alpha-aminoacyl-tRNA + H2O = an N-acyl-L-amino acid + a tRNA + H(+). In terms of biological role, hydrolyzes ribosome-free peptidyl-tRNAs (with 1 or more amino acids incorporated), which drop off the ribosome during protein synthesis, or as a result of ribosome stalling. Its function is as follows. Catalyzes the release of premature peptidyl moieties from peptidyl-tRNA molecules trapped in stalled 50S ribosomal subunits, and thus maintains levels of free tRNAs and 50S ribosomes. This is Peptidyl-tRNA hydrolase from Maricaulis maris (strain MCS10) (Caulobacter maris).